A 748-amino-acid polypeptide reads, in one-letter code: Phosphoribosylformylglycinamidine synthase subunit PurL (748 aa).

Residue histidine 47 is part of the active site. Residues tyrosine 50 and lysine 90 each coordinate ATP. Glutamate 92 is a binding site for Mg(2+). Substrate-binding positions include 93–96 (SHNH) and arginine 115. The Proton acceptor role is filled by histidine 94. Aspartate 116 contributes to the Mg(2+) binding site. Glutamine 240 lines the substrate pocket. Aspartate 268 contacts Mg(2+). Residue 312–314 (ESQ) coordinates substrate. Asparagine 500 and glycine 537 together coordinate ATP. Asparagine 538 is a binding site for Mg(2+). Position 540 (serine 540) interacts with substrate.

Belongs to the FGAMS family. In terms of assembly, monomer. Part of the FGAM synthase complex composed of 1 PurL, 1 PurQ and 2 PurS subunits.

It is found in the cytoplasm. The enzyme catalyses N(2)-formyl-N(1)-(5-phospho-beta-D-ribosyl)glycinamide + L-glutamine + ATP + H2O = 2-formamido-N(1)-(5-O-phospho-beta-D-ribosyl)acetamidine + L-glutamate + ADP + phosphate + H(+). It participates in purine metabolism; IMP biosynthesis via de novo pathway; 5-amino-1-(5-phospho-D-ribosyl)imidazole from N(2)-formyl-N(1)-(5-phospho-D-ribosyl)glycinamide: step 1/2. Functionally, part of the phosphoribosylformylglycinamidine synthase complex involved in the purines biosynthetic pathway. Catalyzes the ATP-dependent conversion of formylglycinamide ribonucleotide (FGAR) and glutamine to yield formylglycinamidine ribonucleotide (FGAM) and glutamate. The FGAM synthase complex is composed of three subunits. PurQ produces an ammonia molecule by converting glutamine to glutamate. PurL transfers the ammonia molecule to FGAR to form FGAM in an ATP-dependent manner. PurS interacts with PurQ and PurL and is thought to assist in the transfer of the ammonia molecule from PurQ to PurL. This Leptospira biflexa serovar Patoc (strain Patoc 1 / Ames) protein is Phosphoribosylformylglycinamidine synthase subunit PurL.